The chain runs to 152 residues: Regulator of G-protein signaling 21 (152 aa).

The RGS domain maps to 21 to 137 (NMDTLLANQA…LKSEIYKKLV (117 aa)).

As to expression, expressed ubiquitously.

Inhibits signal transduction by increasing the GTPase activity of G protein alpha subunits thereby driving them into their inactive GDP-bound form. The protein is Regulator of G-protein signaling 21 (RGS21) of Homo sapiens (Human).